The chain runs to 251 residues: Protein phosphatase 1 regulatory subunit 35 (251 aa).

2 disordered regions span residues 58–99 and 180–235; these read LITV…QQTH and PALA…VPRP. Residues 76–99 are compositionally biased toward basic and acidic residues; sequence PNKDEHGVETDREQSRECDGQQTH.

The protein belongs to the PPP1R35 family.

Its subcellular location is the cytoplasm. It is found in the cytoskeleton. It localises to the microtubule organizing center. The protein localises to the centrosome. The protein resides in the centriole. Its function is as follows. During centriole duplication, may play a role in the centriole elongation by promoting the recruitment of the microtubule-binding elongation machinery, leading to the centriole to centrosome conversion. In addition may play a role in the primary cilia assembly. The polypeptide is Protein phosphatase 1 regulatory subunit 35 (Danio rerio (Zebrafish)).